A 208-amino-acid chain; its full sequence is Probable GTP-binding protein EngB (208 aa).

The region spanning 25–199 (TGIEVAFAGR…RQKLDSWYNG (175 aa)) is the EngB-type G domain. GTP-binding positions include 33–40 (GRSNAGKS), 60–64 (GRTQL), 78–81 (DLPG), 145–148 (TKSD), and 178–180 (FSS). Mg(2+) contacts are provided by Ser40 and Thr62.

Belongs to the TRAFAC class TrmE-Era-EngA-EngB-Septin-like GTPase superfamily. EngB GTPase family. Mg(2+) serves as cofactor.

Its function is as follows. Necessary for normal cell division and for the maintenance of normal septation. The chain is Probable GTP-binding protein EngB from Enterobacter sp. (strain 638).